The primary structure comprises 659 residues: MPSFYEKPLFRYPIYALIALSIITILISFYFNWILGTVEVLLLAVILFFIKRADSLIRQEIDAYISTLSYRLKKVGEEALMEMPIGIMLFNDQYYIEWANPFLSSCFNESTLVGRSLYDTCESVVPLIKQEVESETVTLNDRKFRVVIKRDERLLYFFDVTEQIQIEKLYENERTVLAYIFLDNYDDVTQGLDDQTRSTMNSQVTSLLNAWAQEYGIFLKRTSSERFIAVLNEHILTELENSKFSILDEVREKTSFDGVALTLSVGVGASVSSLKELGDLAQSSLDLALGRGGDQVAIKLPNGKVKFYGGKTNPMEKRTRVRARVISHALKEIVTESSNVIIMGHKFPDMDSIGAAIGILKVAQANNKDGFIVIDPNQIGSSVQRLIGEIKKYEELWSRFITPEEAMEISNDDTLLVIVDTHKPSLVMEERLVNKIEHIVVIDHHRRGEEFIRDPLLVYMEPYASSTAELVTELLEYQPKRLKINMIEATALLAGIIVDTKSFSLRTGSRTFDAASYLRAKGADTVLVQKFLKETVDSYIKRAKLIQHTVLYKDNIAIASLPENEEEYFDQVLIAQAADSLLSMSEVEASFAVARRDEQTVCISARSLGEVNVQIIMEALEGGGHLTNAATQLSGISVSEALERLKHAIDEYFEGGVQR.

Residues Met1 to Pro8 lie on the Cytoplasmic side of the membrane. 2 helical membrane-spanning segments follow: residues Leu9–Phe29 and Tyr30–Ile50. Residues Lys51 to Arg659 lie on the Cytoplasmic side of the membrane. Positions Pro84–Lys149 are PAS-like domain, required for heme-binding. Residues Glu173 to Pro301 enclose the GGDEF domain. Positions Asn339 to Ile496 are DHH domain. Residues His345, Asp349, Asp351, Asp420, His444, and Asp499 each contribute to the Mn(2+) site. The interval Phe591–Lys646 is DHHA1 domain.

Belongs to the GdpP/PdeA phosphodiesterase family. Heme b is required as a cofactor. It depends on Mg(2+) as a cofactor. Mn(2+) serves as cofactor.

Its subcellular location is the cell membrane. The catalysed reaction is 3',3'-c-di-AMP + H2O = 5'-O-phosphonoadenylyl-(3'-&gt;5')-adenosine + H(+). With respect to regulation, phosphodiesterase (PDE) inhibited by Zn(2+), Ca(2+) inhibits in the presence of Mg(2+) but not Mn(2+); c-di-AMP PDE activity is competitively inhibited by ppGpp. Heme binding (by Fe(2+) or Fe(3+) heme) inhibits PDE, activity is partially restored by KCN or NO only for Fe(2+) heme. Binding of NO to Fe(2+) heme switches from hexa- to pentacoordination. Heme binding inhibits the ATPase activity. Its function is as follows. Has phosphodiesterase (PDE) activity against cyclic-di-AMP (c-di-AMP) and to a much lesser extent against cyclic-di-GMP (c-di-GMP) in the DHH/DHHA1 domains. Also has ATPase activity, probably via the GGDEF domain. Overexpression leads to increased sensitivity to methyl methanesulfonate (MMS) and H(2)O(2). Overexpression leads to extreme sensitivity to the beta-lactam antibiotic cefuroxime (CEF), probably dependent on PDE activity. May monitor cellular heme or NO levels. In B.subtilis c-di-AMP is a second messenger that mediates growth, DNA repair and cell wall homeostasis; it is toxic when present in excess. The sequence is that of Cyclic-di-AMP phosphodiesterase GdpP from Bacillus subtilis (strain 168).